The sequence spans 216 residues: Fucoxanthin-chlorophyll a-c binding protein C, chloroplastic (216 aa).

A chloroplast-targeting transit peptide spans methionine 1 to methionine 38. Transmembrane regions (helical) follow at residues isoleucine 80–leucine 100, isoleucine 121–methionine 141, and glycine 182–proline 202.

Belongs to the fucoxanthin chlorophyll protein family. The LHC complex of chromophytic algae is composed of fucoxanthin, chlorophyll A and C bound non-covalently by fucoxanthin chlorophyll proteins (FCPs). The ratio of pigments in this LHC is; fucoxanthin: chlorophyll C: chlorophyll A; (0.6-1): (0.1-0.3): (1).

It is found in the plastid. The protein resides in the chloroplast thylakoid membrane. Its function is as follows. The light-harvesting complex (LHC) functions as a light receptor, it captures and delivers excitation energy to photosystems with which it is closely associated. Energy is transferred from the carotenoid and chlorophyll C (or B) to chlorophyll A and the photosynthetic reaction centers where it is used to synthesize ATP and reducing power. The protein is Fucoxanthin-chlorophyll a-c binding protein C, chloroplastic (FCPC) of Macrocystis pyrifera (Giant kelp).